The following is a 683-amino-acid chain: Probable potassium transport system protein Kup 1 (683 aa).

12 helical membrane-spanning segments follow: residues 13–33, 55–75, 98–118, 139–159, 168–188, 218–238, 251–271, 296–316, 345–365, 376–396, 401–421, and 426–446; these read GLLI…LYVM, ISLV…FIAL, WLVL…TLTP, VPVS…LLLF, IIGK…GVIG, AGIF…ALYS, SWPY…VWIL, LAAI…LITG, IYIP…VLFF, GLSI…WLAM, TIWN…FMLA, and FMHG…IMYV.

This sequence belongs to the HAK/KUP transporter (TC 2.A.72) family.

It is found in the cell membrane. It catalyses the reaction K(+)(in) + H(+)(in) = K(+)(out) + H(+)(out). Transport of potassium into the cell. Likely operates as a K(+):H(+) symporter. This chain is Probable potassium transport system protein Kup 1, found in Lactobacillus johnsonii (strain CNCM I-12250 / La1 / NCC 533).